A 340-amino-acid polypeptide reads, in one-letter code: L-lysine 2,3-aminomutase (340 aa).

The 216-residue stretch at 106–321 folds into the Radical SAM core domain; that stretch reads RKYNNRILLL…SMISGFLVPK (216 aa). Positions 120, 124, and 127 each coordinate [4Fe-4S] cluster. K332 carries the post-translational modification N6-(pyridoxal phosphate)lysine.

Belongs to the radical SAM superfamily. KamA family. Requires [4Fe-4S] cluster as cofactor. It depends on pyridoxal 5'-phosphate as a cofactor.

It catalyses the reaction L-lysine = D-beta-lysine. With EpmA is involved in the beta-lysylation step of the post-translational modification of translation elongation factor P (EF-P) on 'Lys-34'. EpmB appears to act before EpmA. Displays lysine 2,3-aminomutase activity, producing (R)-beta-lysine from (S)-alpha-lysine (L-lysine). This Buchnera aphidicola subsp. Baizongia pistaciae (strain Bp) protein is L-lysine 2,3-aminomutase (epmB).